A 167-amino-acid polypeptide reads, in one-letter code: Biotin carboxyl carrier protein of acetyl-CoA carboxylase (167 aa).

The segment at 53 to 91 (SGFSQERPIPTDPKKDTIKETTTENSETSTTTSSGDFIS) is disordered. Basic and acidic residues predominate over residues 64-74 (DPKKDTIKETT). Over residues 75–86 (TENSETSTTTSS) the composition is skewed to low complexity. Residues 87–163 (GDFISSPLVG…QFGSKLFRIA (77 aa)) form the Biotinyl-binding domain. An N6-biotinyllysine modification is found at K129.

Homodimer.

The protein operates within lipid metabolism; fatty acid biosynthesis. Functionally, this protein is a component of the acetyl coenzyme A carboxylase complex; first, biotin carboxylase catalyzes the carboxylation of the carrier protein and then the transcarboxylase transfers the carboxyl group to form malonyl-CoA. In Chlamydia pneumoniae (Chlamydophila pneumoniae), this protein is Biotin carboxyl carrier protein of acetyl-CoA carboxylase (accB).